We begin with the raw amino-acid sequence, 194 residues long: Thymidylate kinase (194 aa).

7–14 (GVDCVGKS) contributes to the ATP binding site.

Belongs to the thymidylate kinase family.

It catalyses the reaction dTMP + ATP = dTDP + ADP. Phosphorylation of dTMP to form dTDP in both de novo and salvage pathways of dTTP synthesis. This is Thymidylate kinase from Campylobacter lari (strain RM2100 / D67 / ATCC BAA-1060).